Consider the following 790-residue polypeptide: GATOR2 complex protein WDR24 (790 aa).

6 WD repeats span residues Ser-72–Gln-112, Glu-118–Thr-158, Gly-161–Arg-201, Ala-205–Met-245, Gln-249–Ala-291, and Glu-295–Ala-338. Ser-155 carries the post-translational modification Phosphoserine; by AMPK. Phosphoserine is present on residues Ser-470 and Ser-496. Thr-581 is modified (phosphothreonine). 2 positions are modified to phosphoserine: Ser-594 and Ser-598. The segment at Asn-718–Ala-740 adopts a C4-type zinc-finger fold. Residues Cys-719, Cys-722, Cys-733, Cys-736, Cys-743, Cys-746, Cys-757, Cys-760, His-762, His-765, His-768, Cys-779, Cys-783, His-785, and Cys-787 each contribute to the Zn(2+) site. The RING-type; atypical zinc-finger motif lies at Ser-741–Ser-790.

The protein belongs to the WD repeat WDR24 family. As to quaternary structure, component of the GATOR2 subcomplex, composed of MIOS, SEC13, SEH1L, WDR24 and WDR59. The GATOR2 complex interacts with CASTOR1 and CASTOR2; the interaction is negatively regulated by arginine. The GATOR2 complex interacts with SESN1, SESN2 and SESN3; the interaction is negatively regulated by amino acids. SESN1, SESN2 and SESN3 convey leucine availability via direct interaction with SEH1L and WDR24. Phosphorylation at Ser-155 by AMPK in response to glucose deprivation inactivates WDR24 by promoting interaction with 14-3-3 proteins, such as YWHAG, preventing assembly of the GATOR2 complex. In terms of processing, autoubiquitinated; MIOS is required to prevent autoubiquitination.

It is found in the lysosome membrane. The enzyme catalyses S-ubiquitinyl-[E2 ubiquitin-conjugating enzyme]-L-cysteine + [acceptor protein]-L-lysine = [E2 ubiquitin-conjugating enzyme]-L-cysteine + N(6)-ubiquitinyl-[acceptor protein]-L-lysine.. The protein operates within protein modification; protein ubiquitination. With respect to regulation, the GATOR2 complex is negatively regulated by the upstream amino acid sensors CASTOR1 and SESN2, which sequester the GATOR2 complex in absence of amino acids. In the presence of abundant amino acids, GATOR2 is released from CASTOR1 and SESN2 and activated. Its function is as follows. Catalytic component of the GATOR2 complex, a multiprotein complex that acts as an activator of the amino acid-sensing branch of the mTORC1 signaling pathway. The GATOR2 complex indirectly activates mTORC1 through the inhibition of the GATOR1 subcomplex. GATOR2 probably acts as an E3 ubiquitin-protein ligase toward GATOR1. In the presence of abundant amino acids, the GATOR2 complex mediates ubiquitination of the NPRL2 core component of the GATOR1 complex, leading to GATOR1 inactivation. In the absence of amino acids, GATOR2 is inhibited, activating the GATOR1 complex. In addition to its role in regulation of the mTORC1 complex, promotes the acidification of lysosomes and facilitates autophagic flux. Within the GATOR2 complex, WDR24 constitutes the catalytic subunit that mediates 'Lys-6'-linked ubiquitination of NPRL2. The sequence is that of GATOR2 complex protein WDR24 from Homo sapiens (Human).